A 321-amino-acid polypeptide reads, in one-letter code: Probable pectate lyase A (321 aa).

An N-terminal signal peptide occupies residues 1–18; that stretch reads MKFVATLIACGLSGLALA. Asparagine 93 carries N-linked (GlcNAc...) asparagine glycosylation. The Ca(2+) site is built by aspartate 134, aspartate 163, and aspartate 167. Arginine 220 is a catalytic residue. Asparagine 238 carries N-linked (GlcNAc...) asparagine glycosylation.

The protein belongs to the polysaccharide lyase 1 family. Ca(2+) serves as cofactor.

Its subcellular location is the secreted. It carries out the reaction Eliminative cleavage of (1-&gt;4)-alpha-D-galacturonan to give oligosaccharides with 4-deoxy-alpha-D-galact-4-enuronosyl groups at their non-reducing ends.. In terms of biological role, pectinolytic enzyme consist of four classes of enzymes: pectin lyase, polygalacturonase, pectin methylesterase and rhamnogalacturonase. Among pectinolytic enzymes, pectin lyase is the most important in depolymerization of pectin, since it cleaves internal glycosidic bonds of highly methylated pectins. Favors pectate, the anion, over pectin, the methyl ester. The chain is Probable pectate lyase A (plyA) from Aspergillus fumigatus (strain ATCC MYA-4609 / CBS 101355 / FGSC A1100 / Af293) (Neosartorya fumigata).